The chain runs to 468 residues: ATP synthase subunit beta (468 aa).

155 to 162 is an ATP binding site; sequence GGAGVGKT.

It belongs to the ATPase alpha/beta chains family. In terms of assembly, F-type ATPases have 2 components, CF(1) - the catalytic core - and CF(0) - the membrane proton channel. CF(1) has five subunits: alpha(3), beta(3), gamma(1), delta(1), epsilon(1). CF(0) has three main subunits: a(1), b(2) and c(9-12). The alpha and beta chains form an alternating ring which encloses part of the gamma chain. CF(1) is attached to CF(0) by a central stalk formed by the gamma and epsilon chains, while a peripheral stalk is formed by the delta and b chains.

The protein localises to the cell membrane. The catalysed reaction is ATP + H2O + 4 H(+)(in) = ADP + phosphate + 5 H(+)(out). Functionally, produces ATP from ADP in the presence of a proton gradient across the membrane. The catalytic sites are hosted primarily by the beta subunits. This is ATP synthase subunit beta from Streptococcus sanguinis (strain SK36).